The chain runs to 397 residues: Cytochrome b (397 aa).

Transmembrane regions (helical) follow at residues 48 to 68 (FGSMLGLCLVIQLLSGLLLSA), 92 to 113 (WMLRNIHANGSSMFFICIYAHI), 128 to 148 (WYFGVHLFLLTMAEAFLGYTL), and 193 to 213 (FYTLHFLLPFVMVAVVFLHLF). The heme b site is built by His-98 and His-112. 2 residues coordinate heme b: His-197 and His-211. Residue His-216 coordinates a ubiquinone. 4 helical membrane passes run 241–261 (IKDLFGYVCFSFFFMYLVCVD), 303–323 (AGGVYVMFLSIVVLYLIPTLH), 335–355 (LNQVVFWVLVGSFISLTWIGA), and 362–382 (YIILGSAFQLFISLVYCWTPF).

It belongs to the cytochrome b family. In terms of assembly, the main subunits of complex b-c1 are: cytochrome b, cytochrome c1 and the Rieske protein. It depends on heme b as a cofactor.

Its subcellular location is the mitochondrion inner membrane. Its function is as follows. Component of the ubiquinol-cytochrome c reductase complex (complex III or cytochrome b-c1 complex) that is part of the mitochondrial respiratory chain. The b-c1 complex mediates electron transfer from ubiquinol to cytochrome c. Contributes to the generation of a proton gradient across the mitochondrial membrane that is then used for ATP synthesis. This is Cytochrome b (MT-CYB) from Mytilus edulis (Blue mussel).